The primary structure comprises 525 residues: Cytochrome P450 703A2 (525 aa).

Residues 3-23 (PFLLSIILCSWIFVVVSWKKL) form a helical membrane-spanning segment. Heme is bound at residue C455.

The protein belongs to the cytochrome P450 family. Heme serves as cofactor.

The protein localises to the membrane. It catalyses the reaction dodecanoate + reduced [NADPH--hemoprotein reductase] + O2 = 7-hydroxydodecanoate + oxidized [NADPH--hemoprotein reductase] + H2O + H(+). Functionally, involved in pollen exine and anther epicuticular layer development. Catalyzes the in-chain hydroxylation of lauric acid (C12:0) preferentially on position 7, generating 7-hydroxylated lauric acid. Does not possess activity with other fatty acids (C14:0, C16:0, C16:1, and C18:0). Participates in a conserved pathway of in-chain hydroxylation of lauric acid required for anther cuticle and pollen exine formation. Directly regulated by TDR, a known regulator of tapetum programmed cell death (PCD) and pollen exine formation. In Oryza sativa subsp. japonica (Rice), this protein is Cytochrome P450 703A2.